The following is a 232-amino-acid chain: Large ribosomal subunit protein uL1 (232 aa).

The protein belongs to the universal ribosomal protein uL1 family. As to quaternary structure, part of the 50S ribosomal subunit.

Binds directly to 23S rRNA. The L1 stalk is quite mobile in the ribosome, and is involved in E site tRNA release. Its function is as follows. Protein L1 is also a translational repressor protein, it controls the translation of the L11 operon by binding to its mRNA. The polypeptide is Large ribosomal subunit protein uL1 (Phocaeicola vulgatus (strain ATCC 8482 / DSM 1447 / JCM 5826 / CCUG 4940 / NBRC 14291 / NCTC 11154) (Bacteroides vulgatus)).